Reading from the N-terminus, the 189-residue chain is dTTP/UTP pyrophosphatase (189 aa).

Residue Asp70 is the Proton acceptor of the active site. An intrachain disulfide couples Cys74 to Cys79.

It belongs to the Maf family. YhdE subfamily. In terms of assembly, homodimer. A divalent metal cation serves as cofactor.

The protein localises to the cytoplasm. It carries out the reaction dTTP + H2O = dTMP + diphosphate + H(+). The catalysed reaction is UTP + H2O = UMP + diphosphate + H(+). The enzyme catalyses CTP + H2O = CMP + diphosphate + H(+). It catalyses the reaction psi-UTP + H2O = psi-UMP + diphosphate + H(+). It carries out the reaction 5-methyl-CTP + H2O = 5-methyl-CMP + diphosphate + H(+). The catalysed reaction is 5-methyl-UTP + H2O = 5-methyl-UMP + diphosphate + H(+). Nucleoside triphosphate pyrophosphatase that hydrolyzes dTTP and UTP. Can also hydrolyze CTP and the modified nucleotides pseudo-UTP, 5-methyl-CTP (m(5)CTP) and 5-methyl-UTP (m(5)UTP). May have a dual role in cell division arrest and in preventing the incorporation of modified nucleotides into cellular nucleic acids. This chain is dTTP/UTP pyrophosphatase, found in Bacillus subtilis (strain 168).